The primary structure comprises 303 residues: Inner kinetochore subunit mal2 (303 aa).

The protein belongs to the CENP-O/MCM21 family. In terms of assembly, component of the heterotetrameric kinetochore subcomplex COMA, which consists of fta2, fta7, mal2 and mis17. The COMA subcomplex is part of a larger constitutive centromere-associated network (CCAN) (also known as central kinetochore Sim4 complex in fission yeast), which is composed of at least cnl2, cnp3, cnp20, fta1, fta2, fta3, fta4, fta6, fta7, mal2, mhf1, mhf2, mis6, mis15, mis17, sim4 and wip1.

It localises to the nucleus. Its subcellular location is the chromosome. The protein resides in the centromere. The protein localises to the kinetochore. Its function is as follows. Component of the kinetochore, a multiprotein complex that assembles on centromeric DNA and attaches chromosomes to spindle microtubules, mediating chromosome segregation and sister chromatid segregation during meiosis and mitosis. Component of the inner kinetochore COMA complex, which connects centromere-associated proteins and the outer kinetochore. COMA interacts with other inner kinetochore proteins to form the inner kinetochore constitutive centromere-associated network (CCAN), which serves as a structural platform for outer kinetochore assembly. The protein is Inner kinetochore subunit mal2 (mal2) of Schizosaccharomyces pombe (strain 972 / ATCC 24843) (Fission yeast).